The chain runs to 161 residues: DNA-binding protein inhibitor ID-4 (161 aa).

The bHLH domain maps to 52–104 (AAEAAADEPALCLQCDMNDCYSRLRRLVPTIPPNKKVSKVEILQHVIDYILDL). Positions 117-126 (QPPPPAPPHH) are enriched in pro residues. Positions 117-161 (QPPPPAPPHHPAGTCPAAPPRTPLTALNTDPAGAVNKQGDSILCR) are disordered.

Heterodimer with other HLH proteins.

The protein localises to the nucleus. In terms of biological role, transcriptional regulator (lacking a basic DNA binding domain) which negatively regulates the basic helix-loop-helix (bHLH) transcription factors by forming heterodimers and inhibiting their DNA binding and transcriptional activity. Implicated in regulating a variety of cellular processes, including cellular growth, senescence, differentiation, apoptosis, angiogenesis, and neoplastic transformation. The protein is DNA-binding protein inhibitor ID-4 (ID4) of Homo sapiens (Human).